The chain runs to 606 residues: NADH-ubiquinone oxidoreductase chain 5 (606 aa).

A run of 16 helical transmembrane segments spans residues 4–24, 43–63, 84–104, 114–134, 140–160, 171–191, 213–233, 241–261, 272–292, 301–320, 325–347, 366–386, 413–433, 457–477, 485–505, and 582–602; these read FSSLTLVTLILLTMPIAAINF, AFITSMIPTMMFIHTGQEMII, FFSMMFVPVALFVTWSIMEFS, INQFFKYLLLFLITMLILVTA, LFIGWEGVGIMSFLLIGWWYG, AILYNRIGDIGFILAMAWFLI, LMGLILAATGKSAQFGLHPWL, TPVSALLHSSTMVVAGIFLLI, FGQSIMLCLGAMTTLFTAMCA, IIAFSTSSQLGLMMVTIGIN, AFLHICTHAFFKAMLFMCSGSII, MPFTTTALIIGSLALTGMPFL, LVATSFTAIYSTRIIFFALLG, LLIGSLFAGFIISNNIPPMTI, YLKMTALTVTILGFILALEIS, and GLIKLYFLSFLITILISTTLL.

Belongs to the complex I subunit 5 family. Core subunit of respiratory chain NADH dehydrogenase (Complex I) which is composed of 45 different subunits.

It localises to the mitochondrion inner membrane. The enzyme catalyses a ubiquinone + NADH + 5 H(+)(in) = a ubiquinol + NAD(+) + 4 H(+)(out). Its function is as follows. Core subunit of the mitochondrial membrane respiratory chain NADH dehydrogenase (Complex I) which catalyzes electron transfer from NADH through the respiratory chain, using ubiquinone as an electron acceptor. Essential for the catalytic activity and assembly of complex I. The chain is NADH-ubiquinone oxidoreductase chain 5 (MT-ND5) from Ovis aries (Sheep).